The sequence spans 486 residues: N-succinylglutamate 5-semialdehyde dehydrogenase (486 aa).

220–225 (GSSRTG) provides a ligand contact to NAD(+). Active-site residues include Glu243 and Cys277.

The protein belongs to the aldehyde dehydrogenase family. AstD subfamily.

The enzyme catalyses N-succinyl-L-glutamate 5-semialdehyde + NAD(+) + H2O = N-succinyl-L-glutamate + NADH + 2 H(+). Its pathway is amino-acid degradation; L-arginine degradation via AST pathway; L-glutamate and succinate from L-arginine: step 4/5. Its function is as follows. Catalyzes the NAD-dependent reduction of succinylglutamate semialdehyde into succinylglutamate. The polypeptide is N-succinylglutamate 5-semialdehyde dehydrogenase (Shewanella putrefaciens (strain CN-32 / ATCC BAA-453)).